A 135-amino-acid chain; its full sequence is 6,7-dimethyl-8-ribityllumazine synthase (135 aa).

5-amino-6-(D-ribitylamino)uracil contacts are provided by residues Phe12, 44-46, and 68-70; these read AYD and CVI. 73-74 provides a ligand contact to (2S)-2-hydroxy-3-oxobutyl phosphate; the sequence is AT. The active-site Proton donor is the His76. A 5-amino-6-(D-ribitylamino)uracil-binding site is contributed by Leu101. Arg116 is a binding site for (2S)-2-hydroxy-3-oxobutyl phosphate.

This sequence belongs to the DMRL synthase family.

The enzyme catalyses (2S)-2-hydroxy-3-oxobutyl phosphate + 5-amino-6-(D-ribitylamino)uracil = 6,7-dimethyl-8-(1-D-ribityl)lumazine + phosphate + 2 H2O + H(+). Its pathway is cofactor biosynthesis; riboflavin biosynthesis; riboflavin from 2-hydroxy-3-oxobutyl phosphate and 5-amino-6-(D-ribitylamino)uracil: step 1/2. Its function is as follows. Catalyzes the formation of 6,7-dimethyl-8-ribityllumazine by condensation of 5-amino-6-(D-ribitylamino)uracil with 3,4-dihydroxy-2-butanone 4-phosphate. This is the penultimate step in the biosynthesis of riboflavin. The sequence is that of 6,7-dimethyl-8-ribityllumazine synthase from Methanoculleus marisnigri (strain ATCC 35101 / DSM 1498 / JR1).